The chain runs to 481 residues: ATP synthase subunit beta, chloroplastic (481 aa).

G162 to T169 contacts ATP.

Belongs to the ATPase alpha/beta chains family. As to quaternary structure, F-type ATPases have 2 components, CF(1) - the catalytic core - and CF(0) - the membrane proton channel. CF(1) has five subunits: alpha(3), beta(3), gamma(1), delta(1), epsilon(1). CF(0) has four main subunits: a(1), b(1), b'(1) and c(9-12).

It localises to the plastid. Its subcellular location is the chloroplast thylakoid membrane. It carries out the reaction ATP + H2O + 4 H(+)(in) = ADP + phosphate + 5 H(+)(out). Its function is as follows. Produces ATP from ADP in the presence of a proton gradient across the membrane. The catalytic sites are hosted primarily by the beta subunits. This chain is ATP synthase subunit beta, chloroplastic, found in Oltmannsiellopsis viridis (Marine flagellate).